A 252-amino-acid chain; its full sequence is MIEHIFIFNNSTSLSNPVFDISEVAVGQHLYWQIGDYQLHGQVLITSWIVLGGVIIFTLLANSDLKPLPVGLQNFTELVTEFIRDLAKTQIGEEEYLKWVPFLGTIFIFVFVSNWAGALLPWRLIELPNGELAAPTNDINTTVSLALLTSVSYFYAGIRKKGLGYFKRYIQPVVFLLPLNVLEDFSKPLSLSFRLFGNILADELIVGVLVALVPLFVPIPLMLLGVFTSAIQALVFATLAGAYIGESIEDHH.

Helical transmembrane passes span 41–61, 100–120, 138–158, 204–224, and 225–245; these read GQVL…TLLA, VPFL…GALL, DINT…YAGI, LIVG…LMLL, and GVFT…AYIG.

This sequence belongs to the ATPase A chain family. As to quaternary structure, F-type ATPases have 2 components, CF(1) - the catalytic core - and CF(0) - the membrane proton channel. CF(1) has five subunits: alpha(3), beta(3), gamma(1), delta(1), epsilon(1). CF(0) has four main subunits: a, b, b' and c.

The protein localises to the plastid. It localises to the chloroplast thylakoid membrane. In terms of biological role, key component of the proton channel; it plays a direct role in the translocation of protons across the membrane. The polypeptide is ATP synthase subunit a, chloroplastic (Oedogonium cardiacum (Filamentous green alga)).